The following is a 163-amino-acid chain: NADH-quinone oxidoreductase subunit I (163 aa).

4Fe-4S ferredoxin-type domains follow at residues 53–83 and 94–123; these read LRRY…IEAG and VRYD…EGPN. 8 residues coordinate [4Fe-4S] cluster: cysteine 63, cysteine 66, cysteine 69, cysteine 73, cysteine 103, cysteine 106, cysteine 109, and cysteine 113.

This sequence belongs to the complex I 23 kDa subunit family. As to quaternary structure, NDH-1 is composed of 14 different subunits. Subunits NuoA, H, J, K, L, M, N constitute the membrane sector of the complex. The cofactor is [4Fe-4S] cluster.

It localises to the cell inner membrane. The enzyme catalyses a quinone + NADH + 5 H(+)(in) = a quinol + NAD(+) + 4 H(+)(out). NDH-1 shuttles electrons from NADH, via FMN and iron-sulfur (Fe-S) centers, to quinones in the respiratory chain. The immediate electron acceptor for the enzyme in this species is believed to be ubiquinone. Couples the redox reaction to proton translocation (for every two electrons transferred, four hydrogen ions are translocated across the cytoplasmic membrane), and thus conserves the redox energy in a proton gradient. This is NADH-quinone oxidoreductase subunit I from Bartonella tribocorum (strain CIP 105476 / IBS 506).